A 136-amino-acid polypeptide reads, in one-letter code: Large ribosomal subunit protein bL21 (136 aa).

It belongs to the bacterial ribosomal protein bL21 family. Part of the 50S ribosomal subunit. Contacts protein L20.

Its function is as follows. This protein binds to 23S rRNA in the presence of protein L20. The protein is Large ribosomal subunit protein bL21 of Gloeothece citriformis (strain PCC 7424) (Cyanothece sp. (strain PCC 7424)).